A 281-amino-acid polypeptide reads, in one-letter code: Para-Rep C9 (281 aa).

The CRESS-DNA virus Rep endonuclease domain occupies 1–95; the sequence is MSAVNWVFTL…VAGPWSYGEL (95 aa). The RCR-1 motif lies at 7–10; the sequence is VFTL. A divalent metal cation contacts are provided by Glu-33 and His-39. The short motif at 39 to 41 is the RCR-2 element; that stretch reads HIQ. The Nuclear localization signal motif lies at 48–69; the sequence is KKAKMNTVKNIIGGNPHLEKMK. Tyr-78 (for DNA cleavage activity) is an active-site residue. Positions 78-81 match the RCR-3 motif; the sequence is YAQK. Glu-83 serves as a coordination point for a divalent metal cation. The Nuclear localization signal signature appears at 95-101; sequence LLKKGSH. 178–180 contacts ATP; it reads GKS.

The protein belongs to the nanoviridea/circoviridae replication-associated protein family. As to quaternary structure, homooligomer (Potential). Rep binds to repeated DNA motifs (iterons). Mg(2+) serves as cofactor. Requires Mn(2+) as cofactor.

It is found in the host nucleus. It carries out the reaction ATP + H2O = ADP + phosphate + H(+). Functionally, initiates and terminates the replication only of its own subviral DNA molecule. The closed circular ssDNA genome is first converted to a superhelical dsDNA. Rep binds a specific hairpin at the genome origin of replication. Introduces an endonucleolytic nick within the intergenic region of the genome, thereby initiating the rolling circle replication (RCR). Following cleavage, binds covalently to the 5'-phosphate of DNA as a tyrosyl ester. The cleavage gives rise to a free 3'-OH that serves as a primer for the cellular DNA polymerase. The polymerase synthesizes the (+) strand DNA by rolling circle mechanism. After one round of replication, a Rep-catalyzed nucleotidyl transfer reaction releases a circular single-stranded virus genome, thereby terminating the replication. Displays origin-specific DNA cleavage, nucleotidyl transferase, ATPase and helicase activities. This chain is Para-Rep C9 (C9), found in Faba bean necrotic yellows C9 alphasatellite (FBNYC9A).